Here is a 94-residue protein sequence, read N- to C-terminus: Co-chaperonin GroES (94 aa).

Belongs to the GroES chaperonin family. As to quaternary structure, heptamer of 7 subunits arranged in a ring. Interacts with the chaperonin GroEL.

The protein resides in the cytoplasm. Together with the chaperonin GroEL, plays an essential role in assisting protein folding. The GroEL-GroES system forms a nano-cage that allows encapsulation of the non-native substrate proteins and provides a physical environment optimized to promote and accelerate protein folding. GroES binds to the apical surface of the GroEL ring, thereby capping the opening of the GroEL channel. This Bacillus subtilis (strain 168) protein is Co-chaperonin GroES.